The following is a 281-amino-acid chain: uncharacterized protein (281 aa).

2 disordered regions span residues 192–212 (SNSS…IQET) and 227–281 (EDYV…SEEY). Residues 200–211 (MDKKSDDSKIQE) show a composition bias toward basic and acidic residues. 2 stretches are compositionally biased toward acidic residues: residues 227–240 (EDYV…ISDN) and 249–260 (DTDSDLGDLEDP).

This sequence belongs to the cullin family.

This is an uncharacterized protein from Acanthamoeba polyphaga (Amoeba).